A 217-amino-acid chain; its full sequence is Adenylate kinase (217 aa).

10–15 (GAGKGT) contacts ATP. The segment at 30-59 (STGDIFRSNVSQGTPLGVQAKRYMDAGELV) is NMP. AMP-binding positions include threonine 31, arginine 36, 57-59 (ELV), 85-88 (GFPR), and glutamine 92. The interval 126-163 (GRRTCRGCGKVWHVEFDAPSQEGRCDRCGAELFQRDDD) is LID. Arginine 127 lines the ATP pocket. Zn(2+) is bound by residues cysteine 130, cysteine 133, cysteine 150, and cysteine 153. The AMP site is built by arginine 160 and arginine 171. An ATP-binding site is contributed by glycine 199.

The protein belongs to the adenylate kinase family. As to quaternary structure, monomer.

It localises to the cytoplasm. It catalyses the reaction AMP + ATP = 2 ADP. The protein operates within purine metabolism; AMP biosynthesis via salvage pathway; AMP from ADP: step 1/1. Functionally, catalyzes the reversible transfer of the terminal phosphate group between ATP and AMP. Plays an important role in cellular energy homeostasis and in adenine nucleotide metabolism. This is Adenylate kinase from Salinispora tropica (strain ATCC BAA-916 / DSM 44818 / JCM 13857 / NBRC 105044 / CNB-440).